Here is a 409-residue protein sequence, read N- to C-terminus: Isovaleryl-CoA dehydrogenase, mitochondrial (409 aa).

The transit peptide at 1–22 directs the protein to the mitochondrion; that stretch reads MQRFFSARSILGYAVKTRRRSF. Residues 151–160 and 184–186 contribute to the FAD site; these read LAMSEPNAGS and WCT. Ser160 contacts substrate. Substrate is bound by residues 206–207, Tyr261, and 268–271; these read SK and DLER. Catalysis depends on Glu270, which acts as the Proton acceptor. Residues Arg296, Gln307, and 364–368 each bind FAD; that span reads QCLGG. Substrate is bound at residue 391 to 392; the sequence is AG. FAD is bound at residue 393–395; that stretch reads TSE.

The protein belongs to the acyl-CoA dehydrogenase family. As to quaternary structure, homodimer. FAD is required as a cofactor. As to expression, expressed in leaves, stems and flowers. Not detected in roots.

The protein localises to the mitochondrion. The catalysed reaction is 3-methylbutanoyl-CoA + oxidized [electron-transfer flavoprotein] + H(+) = 3-methylbut-2-enoyl-CoA + reduced [electron-transfer flavoprotein]. Its pathway is amino-acid degradation; L-leucine degradation; (S)-3-hydroxy-3-methylglutaryl-CoA from 3-isovaleryl-CoA: step 1/3. In terms of biological role, involved in degradation of the branched-chain amino acids, phytol and lysine for the supply of carbon and electrons to the ETF/ETFQO complex during dark-induced sugar starvation. The sequence is that of Isovaleryl-CoA dehydrogenase, mitochondrial (IVD) from Arabidopsis thaliana (Mouse-ear cress).